The sequence spans 234 residues: Transcriptional regulatory protein WalR (234 aa).

The Response regulatory domain maps to 3 to 116 (KILIVDDEKP…ELQARVKALL (114 aa)). Asp-52 bears the 4-aspartylphosphate mark. The ompR/PhoB-type DNA-binding region spans 133–232 (PQPIQIGDLE…RRGVGYYMRN (100 aa)).

In terms of assembly, monomer. Homodimer. Phosphorylated by WalK; can also be dephosphorylated by WalK.

It is found in the cytoplasm. In terms of biological role, member of the two-component regulatory system WalK/WalR that regulates genes involved in cell wall metabolism. Binds to the promoter region of the transcription factor fabT gene in the fabTH-acp operon in vitro. Inhibits transcription of fabT, probably acting in an unphosphorylated form, thereby playing a role in the regulation of fatty acid biosynthesis. Essential for normal growth in vitro. Required for maintaining normal cellular morphology, acting, at least in part, by regulating peptidoglycan hydrolase pcsB. Involved in maintaining expression of WalRK regulon genes in exponentially growing cells. In Streptococcus pneumoniae serotype 2 (strain D39 / NCTC 7466), this protein is Transcriptional regulatory protein WalR.